Reading from the N-terminus, the 601-residue chain is Elongation factor 4 (601 aa).

The 183-residue stretch at 7–189 (DTIRNFSIVA…AIVAKLPPPK (183 aa)) folds into the tr-type G domain. GTP contacts are provided by residues 19-24 (DHGKST) and 136-139 (NKID).

It belongs to the TRAFAC class translation factor GTPase superfamily. Classic translation factor GTPase family. LepA subfamily.

It localises to the cell inner membrane. It carries out the reaction GTP + H2O = GDP + phosphate + H(+). Required for accurate and efficient protein synthesis under certain stress conditions. May act as a fidelity factor of the translation reaction, by catalyzing a one-codon backward translocation of tRNAs on improperly translocated ribosomes. Back-translocation proceeds from a post-translocation (POST) complex to a pre-translocation (PRE) complex, thus giving elongation factor G a second chance to translocate the tRNAs correctly. Binds to ribosomes in a GTP-dependent manner. This chain is Elongation factor 4, found in Methylobacterium sp. (strain 4-46).